The sequence spans 403 residues: Flavohemoprotein (403 aa).

Residues 1–138 (MLTPEQKAIV…LADLMIGIEK (138 aa)) enclose the Globin domain. A heme b-binding site is contributed by histidine 85. Residues tyrosine 95 and glutamate 137 each act as charge relay system in the active site. The reductase stretch occupies residues 149-403 (GGWRDFRPFR…SQSFAPVILG (255 aa)). Positions 152 to 257 (RDFRPFRVAR…HVPAGDFVLQ (106 aa)) constitute an FAD-binding FR-type domain. FAD contacts are provided by residues tyrosine 190 and 206–209 (RQYS). 269–274 (GVGITP) contacts NADP(+). Residue 390–393 (TFGP) participates in FAD binding.

This sequence belongs to the globin family. Two-domain flavohemoproteins subfamily. In the C-terminal section; belongs to the flavoprotein pyridine nucleotide cytochrome reductase family. Heme b is required as a cofactor. The cofactor is FAD.

The enzyme catalyses 2 nitric oxide + NADPH + 2 O2 = 2 nitrate + NADP(+) + H(+). The catalysed reaction is 2 nitric oxide + NADH + 2 O2 = 2 nitrate + NAD(+) + H(+). The protein is Flavohemoprotein of Deinococcus radiodurans (strain ATCC 13939 / DSM 20539 / JCM 16871 / CCUG 27074 / LMG 4051 / NBRC 15346 / NCIMB 9279 / VKM B-1422 / R1).